A 237-amino-acid chain; its full sequence is Phosphoserine phosphatase (237 aa).

Asp39 acts as the Nucleophile in catalysis. Mg(2+) is bound by residues Asp39 and Glu41. The active-site Proton donor is Glu41. Substrate contacts are provided by residues Glu47, Arg78, 122-123, and Lys165; that span reads SD. Asp184 provides a ligand contact to Mg(2+). Residue Asn187 coordinates substrate.

Belongs to the thrH family. It depends on Mg(2+) as a cofactor.

It carries out the reaction O-phospho-L-serine + H2O = L-serine + phosphate. The enzyme catalyses O-phospho-D-serine + H2O = D-serine + phosphate. Its pathway is amino-acid biosynthesis; L-serine biosynthesis; L-serine from 3-phospho-D-glycerate: step 3/3. Functionally, phosphoserine phosphatase that mediates dephosphorylation of phosphoserine in the serine biosynthesis pathway. Also able to dephosphorylate phospho-threonine. The protein is Phosphoserine phosphatase of Pseudomonas syringae pv. tomato (strain ATCC BAA-871 / DC3000).